Reading from the N-terminus, the 882-residue chain is Translation initiation factor IF-2 (882 aa).

A disordered region spans residues 28 to 294; the sequence is GIRKSADDSV…SSLQQGFQKP (267 aa). Polar residues predominate over residues 67-81; sequence STLNIPGTGGKSKSV. The segment covering 92–209 has biased composition (basic and acidic residues); that stretch reads VKRDPQEAER…RMAEENKWTD (118 aa). Basic residues predominate over residues 244–258; the sequence is GRGRNAKAARPKKGN. The span at 259 to 272 shows a compositional bias: basic and acidic residues; it reads KHAESKADREEARA. The 170-residue stretch at 381–550 folds into the tr-type G domain; it reads PRAPVVTIMG…LLQAEVLELK (170 aa). The G1 stretch occupies residues 390-397; sequence GHVDHGKT. 390-397 is a GTP binding site; the sequence is GHVDHGKT. The segment at 415 to 419 is G2; that stretch reads GITQH. The G3 stretch occupies residues 436-439; sequence DTPG. GTP contacts are provided by residues 436-440 and 490-493; these read DTPGH and NKID. The G4 stretch occupies residues 490–493; the sequence is NKID. The G5 stretch occupies residues 526-528; it reads SAK. Lys800 is modified (N6-acetyllysine).

The protein belongs to the TRAFAC class translation factor GTPase superfamily. Classic translation factor GTPase family. IF-2 subfamily.

Its subcellular location is the cytoplasm. Functionally, one of the essential components for the initiation of protein synthesis. Protects formylmethionyl-tRNA from spontaneous hydrolysis and promotes its binding to the 30S ribosomal subunits. Also involved in the hydrolysis of GTP during the formation of the 70S ribosomal complex. The polypeptide is Translation initiation factor IF-2 (Shigella flexneri serotype 5b (strain 8401)).